The chain runs to 94 residues: RING finger protein Z (94 aa).

Positions 1–19 (MGNCNGASKSNQPDSSRVT) are enriched in polar residues. The interval 1 to 20 (MGNCNGASKSNQPDSSRVTQ) is disordered. A lipid anchor (N-myristoyl glycine; by host) is attached at glycine 2. The RING-type; atypical zinc-finger motif lies at 39-75 (CKCCWFADTNLITCNDHYLCLRCHQVMLRNSDLCNIC). The PTAP/PSAP motif motif lies at 89–92 (PTAP).

It belongs to the arenaviridae Z protein family. As to quaternary structure, interacts with protein NP; this interaction probably directs the encapsidated genome to budding sites. Interacts (via RING domain) with polymerase L; this interaction inhibits viral transcription and replication, Z partially blocks the product exit tunnel for the releasing nascent RNA product. Interacts with the glycoprotein complex; this interaction plays a role in virion budding. Interacts with host eIF4E; this interaction results in eIF4E reduced affinity for its substrate, the 5'-m7 G cap structure. Interacts (via late-budding domain) with host TSG101; this interaction is essential for budding and release of viral particles. Interacts with host RPLP0; this interaction may serve to load ribosome-like particles inside the virion. Interacts with host PML; this interaction induces PML bodies redistribution in the cytoplasm upon viral infection. Post-translationally, myristoylation is required for the role of RING finger protein Z in assembly and budding.

Its subcellular location is the virion. It is found in the host cytoplasm. It localises to the host perinuclear region. The protein resides in the host cell membrane. Its function is as follows. Plays a crucial role in virion assembly and budding. Expressed late in the virus life cycle, it acts as an inhibitor of viral transcription and RNA synthesis by interacting with the viral polymerase L. Presumably recruits the NP encapsidated genome to cellular membranes at budding sites via direct interaction with NP. Plays critical roles in the final steps of viral release by interacting with host TSG101, a member of the vacuolar protein-sorting pathway and using other cellular host proteins involved in vesicle formation pathway. The budding of the virus progeny occurs after association of protein Z with the viral glycoprotein complex SSP-GP1-GP2 at the cell periphery, step that requires myristoylation of protein Z. Also selectively represses protein production by associating with host eIF4E. In cell-based minigenome assay, has an inhibitory effect on the ribonucleoprotein machinery (vRNP), which is responsible for the replication and transcription of the viral genome. The protein is RING finger protein Z of Akodon azarae (Azara's grass mouse).